The primary structure comprises 51 residues: Sperm protamine P1 (51 aa).

The protein belongs to the protamine P1 family. In terms of tissue distribution, testis.

Its subcellular location is the nucleus. It localises to the chromosome. Its function is as follows. Protamines substitute for histones in the chromatin of sperm during the haploid phase of spermatogenesis. They compact sperm DNA into a highly condensed, stable and inactive complex. The polypeptide is Sperm protamine P1 (PRM1) (Macaca mulatta (Rhesus macaque)).